The primary structure comprises 586 residues: MNYPINRQDYAAMFGPTVGDKIRLADTELLIEVEKDFTTYGEEVKFGGGKVIRDGMGQSPIINGDDDNTAVDTVITNALILDWWGIVKADIGIKQGKIFKIGKAGNPYTQDNIDIIIGPGTEVIAGEGRIVTAGAIDTHIHFICPQQIETALAAGITTMIGGGTGPAAGTTATTCTPGPWHIHRMLQSADAFPINLGFFGKGNTSKPEALEQQIKAGALGLKLHEDWGSTPAAIDTCLTVADLYDIQVAIHTDTLNEGGFVENTIAAFKNRVIHTFHTEGAGGGHAPDILKVCQYDYVLPASTNPTRPYTINTVAEHKDMLMVCHHLDPNIPEDVQFADSRIRPETIAAEDILHDLGAISIMSSDSQAMGRIGEVILRTWQTAHKMKLQRGWLAPNIDPETHYDQSEQDSDRGNDNYRAKRYIAKYTINPAIAHGISQYVGSIEEGKLADLCLWKPAFFGVKPELVIKGGMIVWAQMGDPNASISTPEPVYMRPMFGAFGGAIGATSMTFVSQAAIELEIPKQLGLTSLVAPVTHTRDISKAHLKHNYTTPEMRIDPETYEVWADGELLTCEPVSVLPMAQRYFLF.

In terms of domain architecture, Urease spans 134-586 (GAIDTHIHFI…LPMAQRYFLF (453 aa)). Ni(2+) is bound by residues His139, His141, and Lys222. At Lys222 the chain carries N6-carboxylysine. His224 serves as a coordination point for substrate. Residues His251 and His277 each contribute to the Ni(2+) site. His325 (proton donor) is an active-site residue. A Ni(2+)-binding site is contributed by Asp365.

This sequence belongs to the metallo-dependent hydrolases superfamily. Urease alpha subunit family. Heterotrimer of UreA (gamma), UreB (beta) and UreC (alpha) subunits. Three heterotrimers associate to form the active enzyme. Requires Ni cation as cofactor. In terms of processing, carboxylation allows a single lysine to coordinate two nickel ions.

Its subcellular location is the cytoplasm. It carries out the reaction urea + 2 H2O + H(+) = hydrogencarbonate + 2 NH4(+). Its pathway is nitrogen metabolism; urea degradation; CO(2) and NH(3) from urea (urease route): step 1/1. The sequence is that of Urease subunit alpha from Gloeothece citriformis (strain PCC 7424) (Cyanothece sp. (strain PCC 7424)).